A 207-amino-acid polypeptide reads, in one-letter code: Small ribosomal subunit protein uS4A (207 aa).

In terms of domain architecture, S4 RNA-binding spans threonine 98–lysine 158.

Belongs to the universal ribosomal protein uS4 family. As to quaternary structure, part of the 30S ribosomal subunit. Contacts protein S5. The interaction surface between S4 and S5 is involved in control of translational fidelity.

Functionally, one of the primary rRNA binding proteins, it binds directly to 16S rRNA where it nucleates assembly of the body of the 30S subunit. With S5 and S12 plays an important role in translational accuracy. The sequence is that of Small ribosomal subunit protein uS4A from Alkaliphilus oremlandii (strain OhILAs) (Clostridium oremlandii (strain OhILAs)).